The chain runs to 473 residues: Sphingosine kinase 1 (473 aa).

Residues 83-233 (QCRGNLLVFI…VALYSVKTDN (151 aa)) form the DAGKc domain. Residues 93–95 (NPN) and 125–129 (TTGPN) contribute to the ATP site. Substrate is bound at residue 151–154 (SGDG). The active-site Proton donor/acceptor is the Asp-153. Residues Glu-158 and 184 to 186 (GSG) each bind ATP. Asp-251 lines the substrate pocket. ATP is bound by residues Arg-258, Arg-265, and 448–450 (DGE).

Mg(2+) serves as cofactor. Expressed in the majority of cholinergic and GABAergic neurons, body wall muscle, excretory canal cells, intestine, and hypodermis.

The protein localises to the presynaptic cell membrane. The protein resides in the cell projection. Its subcellular location is the axon. It is found in the perikaryon. It localises to the mitochondrion membrane. It catalyses the reaction a sphingoid base + ATP = a sphingoid 1-phosphate + ADP + H(+). It carries out the reaction 15-methylhexadecasphing-4-enine + ATP = 15-methylhexadecasphing-4-enine 1-phosphate + ADP + H(+). The enzyme catalyses 15-methylhexadecasphinganine + ATP = 15-methylhexadecasphinganine 1-phosphate + ADP + H(+). Its pathway is lipid metabolism; sphingolipid metabolism. Catalyzes the phosphorylation of sphingoid bases to form sphingoid 1-phosphate (SPP), which have both intra- and extracellular functions. C.elegans contain specific sphingoid bases, which are unique or different in structure compared to the sphingoid bases found in other animals. Two examples of these distinctive compounds are: 15-methylhexadecasphinganine and 15-methylhexadecasphing-4-enine. Required for neurotransmitter release from neuromuscular junctions. Acts by recruiting the synaptic vesicle priming protein unc-13 to synapses. The chain is Sphingosine kinase 1 (sphk-1) from Caenorhabditis elegans.